The following is a 168-amino-acid chain: Mitochondrial inner membrane protein SHH4 (168 aa).

The N-terminal 23 residues, 1 to 23, are a transit peptide targeting the mitochondrion; the sequence is MSSTKFLKPLCRIRAFHTSIARS. At 24-65 the chain is on the mitochondrial matrix side; the sequence is FTIPFLPKIPQKPGGVSGTANDSSYMPPESRAQGSYHWIVER. A helical transmembrane segment spans residues 66–86; it reads GLSLAVLPLIAVPLVTTGPIS. Residues 87–92 are Mitochondrial intermembrane-facing; it reads TFTDTF. Residues 93-113 form a helical membrane-spanning segment; it reads LSLVLLGHCHIGFQSCIIDYI. Heme is bound at residue C101. Y112 contributes to the a ubiquinone binding site. Residues 114-120 are Mitochondrial matrix-facing; sequence SERVYGK. The helical transmembrane segment at 121–141 threads the bilayer; it reads VHHYAMYLLSLGSFLSFVGIY. At 142–168 the chain is on the mitochondrial intermembrane side; that stretch reads KLESQEAGLIASLKSLWDNKPVEKKRQ.

This sequence belongs to the CybS family. In terms of assembly, interacts with SDH3.

The protein resides in the mitochondrion inner membrane. In terms of biological role, homolog of SDH4, but seems not to be a stoichiometric subunit of either the succinate dehydrogenase (SDH) complex or the mitochondrial inner membrane translocase TIM22 complex. The protein is Mitochondrial inner membrane protein SHH4 of Saccharomyces cerevisiae (strain ATCC 204508 / S288c) (Baker's yeast).